Reading from the N-terminus, the 217-residue chain is Large ribosomal subunit protein uL1 (217 aa).

It belongs to the universal ribosomal protein uL1 family.

The polypeptide is Large ribosomal subunit protein uL1 (RPL10A) (Eremothecium gossypii (strain ATCC 10895 / CBS 109.51 / FGSC 9923 / NRRL Y-1056) (Yeast)).